Consider the following 415-residue polypeptide: Putative competence-damage inducible protein (415 aa).

This sequence belongs to the CinA family.

In Listeria welshimeri serovar 6b (strain ATCC 35897 / DSM 20650 / CCUG 15529 / CIP 8149 / NCTC 11857 / SLCC 5334 / V8), this protein is Putative competence-damage inducible protein.